Here is a 95-residue protein sequence, read N- to C-terminus: Progonadoliberin-1 (95 aa).

The signal sequence occupies residues 1 to 23 (MAPQTSNLWLLLVVMMVMSQGCC). A Pyrrolidone carboxylic acid modification is found at Gln24. Residue Gly33 is modified to Glycine amide.

Belongs to the GnRH family.

Its subcellular location is the secreted. In terms of biological role, stimulates the secretion of gonadotropins. This Pagrus major (Red sea bream) protein is Progonadoliberin-1 (gnrh1).